Consider the following 376-residue polypeptide: Actin, macronuclear (376 aa).

The protein belongs to the actin family.

The protein localises to the cytoplasm. It localises to the cytoskeleton. It catalyses the reaction ATP + H2O = ADP + phosphate + H(+). Its function is as follows. Actins are highly conserved proteins that are involved in various types of cell motility and are ubiquitously expressed in all eukaryotic cells. The polypeptide is Actin, macronuclear (Tetrahymena thermophila).